Consider the following 510-residue polypeptide: Glycogen synthase (510 aa).

Lys18 is an ADP-alpha-D-glucose binding site.

Belongs to the glycosyltransferase 1 family. Bacterial/plant glycogen synthase subfamily.

The catalysed reaction is [(1-&gt;4)-alpha-D-glucosyl](n) + ADP-alpha-D-glucose = [(1-&gt;4)-alpha-D-glucosyl](n+1) + ADP + H(+). Its pathway is glycan biosynthesis; glycogen biosynthesis. Its function is as follows. Synthesizes alpha-1,4-glucan chains using ADP-glucose. This Bordetella bronchiseptica (strain ATCC BAA-588 / NCTC 13252 / RB50) (Alcaligenes bronchisepticus) protein is Glycogen synthase.